The chain runs to 212 residues: Probable U3 small nucleolar RNA-associated protein 11 (212 aa).

Belongs to the UTP11 family. In terms of assembly, component of the ribosomal small subunit (SSU) processome.

The protein resides in the nucleus. Its subcellular location is the nucleolus. Involved in nucleolar processing of pre-18S ribosomal RNA. The protein is Probable U3 small nucleolar RNA-associated protein 11 of Plasmodium falciparum (isolate 3D7).